Reading from the N-terminus, the 544-residue chain is MAKRIIYNENARRALEKGIDILAESVAVTLGPKGRNVVLEKKFGAPQIINDGVTIAKEIELEDHIENTGVALIRQAASKTNDAAGDGTTTATVLAHAMVKAGLRNVAAGANAITLKKGIDKASDFLVSKIKEQAKPIADSNAIAQVGTISAGNDEEVGKMIADAMDKVGKEGVISLEEGKSMETELEVTEGMRFDKGYISPYFATDTERMEAVLDEPYILLTDKKIGLVQDLVPVLEQIARTGKPLMIIAEDIEKEALATLVVNRLRGVLNVAAVKAPGFGDRRKAMLEDMAVLTNGQLITEDAGLKLENAKLEMLGTARRVTINKDTTTIVAEGNEAAVGARCEQIKKQMDETDSTYDKEKLQERLAKLAGGVAVVKVGAATETEMKDKKLRLEDAINATKAAVEEGIVPGGGTTLAHLAPSLEEWANGNLSGEELIGANIVAAALTAPLMRIAENAGANGAVVAENVKSRAISEGYNAATGDYVDMLAAGIVDPAKVTRSGLQNAASIAGMVLTTECIVADLPEKKDAAPAGGGMGGGDFDY.

ATP is bound by residues 29–32 (TLGP), 86–90 (DGTTT), G413, 479–481 (NAA), and D495.

Belongs to the chaperonin (HSP60) family. In terms of assembly, forms a cylinder of 14 subunits composed of two heptameric rings stacked back-to-back. Interacts with the co-chaperonin GroES.

The protein resides in the cytoplasm. It carries out the reaction ATP + H2O + a folded polypeptide = ADP + phosphate + an unfolded polypeptide.. In terms of biological role, together with its co-chaperonin GroES, plays an essential role in assisting protein folding. The GroEL-GroES system forms a nano-cage that allows encapsulation of the non-native substrate proteins and provides a physical environment optimized to promote and accelerate protein folding. The chain is Chaperonin GroEL 1 from Parasynechococcus marenigrum (strain WH8102).